We begin with the raw amino-acid sequence, 245 residues long: 1-(5-phosphoribosyl)-5-[(5-phosphoribosylamino)methylideneamino] imidazole-4-carboxamide isomerase (245 aa).

Asp-11 functions as the Proton acceptor in the catalytic mechanism. Asp-132 (proton donor) is an active-site residue.

It belongs to the HisA/HisF family.

It localises to the cytoplasm. It carries out the reaction 1-(5-phospho-beta-D-ribosyl)-5-[(5-phospho-beta-D-ribosylamino)methylideneamino]imidazole-4-carboxamide = 5-[(5-phospho-1-deoxy-D-ribulos-1-ylimino)methylamino]-1-(5-phospho-beta-D-ribosyl)imidazole-4-carboxamide. Its pathway is amino-acid biosynthesis; L-histidine biosynthesis; L-histidine from 5-phospho-alpha-D-ribose 1-diphosphate: step 4/9. The protein is 1-(5-phosphoribosyl)-5-[(5-phosphoribosylamino)methylideneamino] imidazole-4-carboxamide isomerase of Xanthobacter autotrophicus (strain ATCC BAA-1158 / Py2).